The following is a 506-amino-acid chain: Cysteine--tRNA ligase (506 aa).

Cys-34 is a Zn(2+) binding site. The short motif at 36 to 46 is the 'HIGH' region element; sequence PTVYDFAHIGN. Zn(2+) is bound by residues Cys-230, His-269, and Glu-273. Residues 302 to 306 carry the 'KMSKS' region motif; it reads KMSKS. Lys-305 contacts ATP.

This sequence belongs to the class-I aminoacyl-tRNA synthetase family. As to quaternary structure, monomer. Zn(2+) is required as a cofactor.

The protein localises to the cytoplasm. It catalyses the reaction tRNA(Cys) + L-cysteine + ATP = L-cysteinyl-tRNA(Cys) + AMP + diphosphate. This Brucella ovis (strain ATCC 25840 / 63/290 / NCTC 10512) protein is Cysteine--tRNA ligase.